We begin with the raw amino-acid sequence, 195 residues long: HTH-type transcriptional regulator BetI (195 aa).

An HTH tetR-type domain is found at 8–68; the sequence is EIRRAQLIDA…ATMRHVLRDL (61 aa). Positions 31 to 50 form a DNA-binding region, H-T-H motif; it reads TLASVAQRANISTGIVSHYF.

The protein operates within amine and polyamine biosynthesis; betaine biosynthesis via choline pathway [regulation]. Functionally, repressor involved in the biosynthesis of the osmoprotectant glycine betaine. It represses transcription of the choline transporter BetT and the genes of BetAB involved in the synthesis of glycine betaine. This is HTH-type transcriptional regulator BetI from Burkholderia thailandensis (strain ATCC 700388 / DSM 13276 / CCUG 48851 / CIP 106301 / E264).